The sequence spans 342 residues: Galactose mutarotase (342 aa).

Ser-14 carries the post-translational modification Phosphoserine. Residues Asn-81–Arg-82 and His-107 each bind beta-D-galactose. A Phosphoserine modification is found at Ser-124. Residue His-176 is the Proton donor of the active site. Beta-D-galactose contacts are provided by residues His-176–Tyr-178, Asp-243, Gln-279, and Glu-307. Glu-307 serves as the catalytic Proton acceptor.

It belongs to the aldose epimerase family. In terms of assembly, monomer.

The protein localises to the cytoplasm. It catalyses the reaction alpha-D-galactose = beta-D-galactose. The catalysed reaction is alpha-D-glucose = beta-D-glucose. It participates in carbohydrate metabolism; hexose metabolism. The protein operates within carbohydrate metabolism; galactose metabolism. In terms of biological role, mutarotase that catalyzes the interconversion of beta-D-galactose and alpha-D-galactose during galactose metabolism. Beta-D-galactose is metabolized in the liver into glucose 1-phosphate, the primary metabolic fuel, by the action of four enzymes that constitute the Leloir pathway: GALM, GALK1 (galactokinase), GALT (galactose-1-phosphate uridylyltransferase) and GALE (UDP-galactose-4'-epimerase). Involved in the maintenance of the equilibrium between the beta- and alpha-anomers of galactose, therefore ensuring a sufficient supply of the alpha-anomer for GALK1. Also active on D-glucose although shows a preference for galactose over glucose. This is Galactose mutarotase (GALM) from Sus scrofa (Pig).